Reading from the N-terminus, the 299-residue chain is Secreted LysM effector ldpB (299 aa).

The first 19 residues, 1 to 19 (MGLTSILIAQVLFLGAANS), serve as a signal peptide directing secretion. 3 consecutive LysM domains span residues 46 to 91 (WVND…SYCV), 135 to 182 (AFYK…YVCI), and 211 to 258 (KYHK…YVCV). Asn154 is a glycosylation site (N-linked (GlcNAc...) asparagine). Residues 266-283 (ATATPQPTPQPQQSSSPD) show a composition bias toward low complexity. Positions 266–288 (ATATPQPTPQPQQSSSPDQPMPQ) are disordered.

Belongs to the secreted LysM effector family.

The protein resides in the secreted. It localises to the cell wall. It is found in the extracellular space. The protein localises to the extracellular matrix. Cell wall chitin of A.fumigatus recruits lung eosinophils during infection and ldpB might have a role in sequestration of chitin and act as triggers of host immunity to dampen host defense. This Aspergillus fumigatus (strain ATCC MYA-4609 / CBS 101355 / FGSC A1100 / Af293) (Neosartorya fumigata) protein is Secreted LysM effector ldpB.